Reading from the N-terminus, the 571-residue chain is Fumarate reductase (cytochrome) (571 aa).

His8, Cys14, Cys17, His18, Cys36, Cys39, His40, His52, His58, His61, Cys68, Cys71, His72, Ala74, His75, Cys82, Cys85, His86, Asn91, and Tyr94 together coordinate heme c. The interval 118 to 571 (ALASAPHDTV…EEAAKYSKKN (454 aa)) is flavoprotein-like. Residues Ala137, Glu156, Asn164, Ala165, Ala169, Gly170, Gly171, Gly278, and Gln338 each coordinate FAD. A succinate-binding site is contributed by Gly170. 3 residues coordinate succinate: His365, Thr377, and Glu378. 3 residues coordinate fumarate: Thr377, Glu378, and Arg402. Arg402 acts as the Proton donor in catalysis. Position 431 (Lys431) interacts with heme c. His504 is a binding site for succinate. His504 is a binding site for fumarate. 2 residues coordinate FAD: His505 and Glu534. Residues Arg544 and Gly547 each contribute to the succinate site. 2 residues coordinate fumarate: Arg544 and Gly547. Residues Ala549 and Ile550 each coordinate FAD.

As to quaternary structure, monomer. FAD serves as cofactor. The cofactor is heme c.

The protein resides in the periplasm. The catalysed reaction is 2 Fe(III)-[cytochrome c] + succinate = fumarate + 2 Fe(II)-[cytochrome c] + 2 H(+). Its function is as follows. Flavocytochrome that catalyzes the reduction of fumarate to succinate. Is essential for fumarate respiration during anaerobic growth, acting as the terminal reductase. Receives electrons from the membrane-bound tetraheme c-type cytochrome CymA. In vitro, can use the artificial electron donor methyl viologen. The sequence is that of Fumarate reductase (cytochrome) (fccA) from Shewanella frigidimarina.